The sequence spans 509 residues: Maturase K (509 aa).

It belongs to the intron maturase 2 family. MatK subfamily.

The protein resides in the plastid. It is found in the chloroplast. In terms of biological role, usually encoded in the trnK tRNA gene intron. Probably assists in splicing its own and other chloroplast group II introns. This Nicotiana alata (Winged tobacco) protein is Maturase K.